The following is an 825-amino-acid chain: NT-3 growth factor receptor (825 aa).

An N-terminal signal peptide occupies residues 1–31; it reads MDVSLCPAKCSFWRIFLLGSVWLDYVGSVLA. 2 disulfides stabilise this stretch: C32–C38 and C36–C45. The Extracellular segment spans residues 32–429; that stretch reads CPANCVCSKT…TVTHKPEEDT (398 aa). N68, N72, and N79 each carry an N-linked (GlcNAc...) asparagine glycan. 2 LRR repeats span residues 104-125 and 128-149; these read GLQK…AFAK and HLRY…LFQT. Residues N133 and N163 are each glycosylated (N-linked (GlcNAc...) asparagine). Positions 160-209 constitute an LRRCT domain; that stretch reads NFFNCSCDIRWMQLWQEQGEAKLNNQNLYCINADGSQLPLFRMNISQCDL. 2 disulfide bridges follow: C164-C189 and C166-C207. N-linked (GlcNAc...) asparagine glycans are attached at residues N203, N218, N232, N259, N267, N272, and N294. Ig-like C2-type domains lie at 210-300 and 309-382; these read PEIS…VALT and SLEE…IAKN. A disulfide bridge links C231 with C284. Cysteines 320 and 362 form a disulfide. N-linked (GlcNAc...) asparagine glycosylation is found at N375 and N388. A helical membrane pass occupies residues 430–453; sequence FGVSIAVGLAAFACVLLVVLFIMI. The Cytoplasmic portion of the chain corresponds to 454 to 825; that stretch reads NKYGRRSKFG…ATPIYLDILG (372 aa). S493 bears the Phosphoserine mark. The residue at position 516 (Y516) is a Phosphotyrosine; by autocatalysis. The 288-residue stretch at 538-825 folds into the Protein kinase domain; the sequence is IVLKRELGEG…ATPIYLDILG (288 aa). ATP is bound by residues 544 to 552 and K572; that span reads LGEGAFGKV. The active-site Proton acceptor is D679. Y705, Y709, and Y710 each carry phosphotyrosine; by autocatalysis.

The protein belongs to the protein kinase superfamily. Tyr protein kinase family. Insulin receptor subfamily. In terms of assembly, exists in a dynamic equilibrium between monomeric (low affinity) and dimeric (high affinity) structures. Binds SH2B2. Interacts with SQSTM1 and KIDINS220. Interacts with PTPRS. Interacts with MAPK8IP3/JIP3. Post-translationally, ligand-mediated auto-phosphorylation.

The protein resides in the membrane. The enzyme catalyses L-tyrosyl-[protein] + ATP = O-phospho-L-tyrosyl-[protein] + ADP + H(+). Functionally, receptor tyrosine kinase involved in nervous system and probably heart development. Upon binding of its ligand NTF3/neurotrophin-3, NTRK3 autophosphorylates and activates different signaling pathways, including the phosphatidylinositol 3-kinase/AKT and the MAPK pathways, that control cell survival and differentiation. This chain is NT-3 growth factor receptor (NTRK3), found in Macaca fascicularis (Crab-eating macaque).